Here is a 78-residue protein sequence, read N- to C-terminus: Acyl carrier protein (78 aa).

The Carrier domain occupies 2–77; sequence QNIEKKIKKI…SIFDIIKKYV (76 aa). Position 37 is an O-(pantetheine 4'-phosphoryl)serine (Ser37).

The protein belongs to the acyl carrier protein (ACP) family. Post-translationally, 4'-phosphopantetheine is transferred from CoA to a specific serine of apo-ACP by AcpS. This modification is essential for activity because fatty acids are bound in thioester linkage to the sulfhydryl of the prosthetic group.

The protein localises to the cytoplasm. The protein operates within lipid metabolism; fatty acid biosynthesis. Its function is as follows. Carrier of the growing fatty acid chain in fatty acid biosynthesis. The chain is Acyl carrier protein from Buchnera aphidicola subsp. Baizongia pistaciae (strain Bp).